The following is an 85-amino-acid chain: Conotoxin Lt28.4 (85 aa).

Residues 1-21 form the signal peptide; that stretch reads MPKLEMMLLVLLILPLCYIDA. Residues 22–40 constitute a propeptide that is removed on maturation; it reads VGPPPPWNMEDEIIEHWQK.

It belongs to the conotoxin D superfamily. Post-translationally, contains 5 disulfide bonds. In terms of tissue distribution, expressed by the venom duct.

The protein resides in the secreted. In terms of biological role, probable neurotoxin. The protein is Conotoxin Lt28.4 of Conus litteratus (Lettered cone).